Consider the following 37-residue polypeptide: Large ribosomal subunit protein bL36B (37 aa).

It belongs to the bacterial ribosomal protein bL36 family.

This Saccharopolyspora erythraea (strain ATCC 11635 / DSM 40517 / JCM 4748 / NBRC 13426 / NCIMB 8594 / NRRL 2338) protein is Large ribosomal subunit protein bL36B.